The primary structure comprises 33 residues: Photosystem II reaction center protein Psb30 (33 aa).

A helical transmembrane segment spans residues glutamine 8–phenylalanine 28.

It belongs to the Psb30/Ycf12 family. In terms of assembly, PSII is composed of 1 copy each of membrane proteins PsbA, PsbB, PsbC, PsbD, PsbE, PsbF, PsbH, PsbI, PsbJ, PsbK, PsbL, PsbM, PsbT, PsbX, PsbY, PsbZ, Psb30/Ycf12, peripheral proteins of the oxygen-evolving complex and a large number of cofactors. It forms dimeric complexes.

The protein resides in the plastid. Its subcellular location is the chloroplast thylakoid membrane. A core subunit of photosystem II (PSII), probably helps stabilize the reaction center. The chain is Photosystem II reaction center protein Psb30 from Staurastrum punctulatum (Green alga).